The following is a 620-amino-acid chain: Glutathione-regulated potassium-efflux system protein KefC (620 aa).

12 helical membrane-spanning segments follow: residues 4-24 (HTLL…PIAV), 26-46 (LGLG…PWGL), 54-74 (SILH…GLEL), 90-110 (GALQ…FLGL), 114-134 (VAEL…MQAM), 149-169 (FAVL…IPLL), 178-198 (LGAF…VVLL), 218-238 (VFSA…EEVG), 270-290 (GLLL…GTLV), 294-314 (LRIL…LWLV), 327-347 (WFAV…GAAQ), and 359-379 (ALTL…VLLT). Positions 399–518 (QPRVIVAGFG…AGVAMPERET (120 aa)) constitute an RCK N-terminal domain. Residues 599-620 (QGTAEGKHSGEAADEPEVKPSI) are disordered.

Belongs to the monovalent cation:proton antiporter 2 (CPA2) transporter (TC 2.A.37) family. KefC subfamily. As to quaternary structure, homodimer. Interacts with the regulatory subunit KefF.

The protein resides in the cell inner membrane. Functionally, pore-forming subunit of a potassium efflux system that confers protection against electrophiles. Catalyzes K(+)/H(+) antiport. The sequence is that of Glutathione-regulated potassium-efflux system protein KefC from Salmonella choleraesuis (strain SC-B67).